The chain runs to 454 residues: Asparagine--tRNA ligase (454 aa).

It belongs to the class-II aminoacyl-tRNA synthetase family. In terms of assembly, homodimer.

The protein resides in the cytoplasm. It carries out the reaction tRNA(Asn) + L-asparagine + ATP = L-asparaginyl-tRNA(Asn) + AMP + diphosphate + H(+). This Mesoplasma florum (strain ATCC 33453 / NBRC 100688 / NCTC 11704 / L1) (Acholeplasma florum) protein is Asparagine--tRNA ligase.